Reading from the N-terminus, the 493-residue chain is Extracellular tyrosine-protein kinase PKDCC (493 aa).

The signal sequence occupies residues 1 to 32; that stretch reads MRRRRAAVAAGFCASFLLGSVLNVLFAPGSEP. The disordered stretch occupies residues 28-128; it reads PGSEPPRPGQ…PGPGSPGPGP (101 aa). Residues 30–46 are compositionally biased toward pro residues; that stretch reads SEPPRPGQSPEPSPAPG. Over residues 52–69 the composition is skewed to basic and acidic residues; it reads GRGELARQIRARYEEVQR. Composition is skewed to pro residues over residues 95–105 and 114–127; these read PGLPRPRPPWA and GWPP…PGPG. N137 carries N-linked (GlcNAc...) asparagine glycosylation. The 356-residue stretch at 138–493 folds into the Protein kinase domain; it reads VSGAQYMGSG…NKTTYVKASG (356 aa). ATP-binding positions include 144-152 and K166; that span reads MGSGYTKAV. Y148 bears the Phosphotyrosine mark. S177 bears the Phosphoserine mark. The Proton acceptor role is filled by D278. N-linked (GlcNAc...) asparagine glycans are attached at residues N320, N369, N400, N460, and N484.

Belongs to the protein kinase superfamily. N-glycosylated. In terms of processing, phosphorylated on tyrosines; probably via autophosphorylation. As to expression, highly expressed in platelets.

It localises to the secreted. It is found in the golgi apparatus. It catalyses the reaction L-tyrosyl-[protein] + ATP = O-phospho-L-tyrosyl-[protein] + ADP + H(+). Its function is as follows. Secreted tyrosine-protein kinase that mediates phosphorylation of extracellular proteins and endogenous proteins in the secretory pathway, which is essential for patterning at organogenesis stages. Mediates phosphorylation of MMP1, MMP13, MMP14, MMP19 and ERP29. Probably plays a role in platelets: rapidly and quantitatively secreted from platelets in response to stimulation of platelet degranulation. May also have serine/threonine protein kinase activity. Required for longitudinal bone growth through regulation of chondrocyte differentiation. May be indirectly involved in protein transport from the Golgi apparatus to the plasma membrane. In Homo sapiens (Human), this protein is Extracellular tyrosine-protein kinase PKDCC.